The primary structure comprises 84 residues: MNQLVIQLIQLYKKIISPLLPPACRFTPTCSEYTIQAFRECGFFQAIQLSAWRILRCNPLSQGFEDPLPPNTKRTNLTHGRQTK.

Residues 61-84 are disordered; it reads SQGFEDPLPPNTKRTNLTHGRQTK. Positions 72–84 are enriched in polar residues; sequence TKRTNLTHGRQTK.

The protein belongs to the UPF0161 family.

It localises to the cell inner membrane. In terms of biological role, could be involved in insertion of integral membrane proteins into the membrane. This Leptospira borgpetersenii serovar Hardjo-bovis (strain JB197) protein is Putative membrane protein insertion efficiency factor.